The sequence spans 529 residues: Arginine--tRNA ligase (529 aa).

Residues 113-123 (ANPTGPLHIGH) carry the 'HIGH' region motif.

The protein belongs to the class-I aminoacyl-tRNA synthetase family. Monomer.

It localises to the cytoplasm. The catalysed reaction is tRNA(Arg) + L-arginine + ATP = L-arginyl-tRNA(Arg) + AMP + diphosphate. This chain is Arginine--tRNA ligase, found in Campylobacter curvus (strain 525.92).